Reading from the N-terminus, the 205-residue chain is GTP cyclohydrolase-2 (205 aa).

49–53 (RIHSE) lines the GTP pocket. Zn(2+)-binding residues include Cys-54, Cys-65, and Cys-67. GTP is bound by residues Gln-70, 92-94 (EGR), and Thr-114. Asp-126 functions as the Proton acceptor in the catalytic mechanism. Arg-128 acts as the Nucleophile in catalysis. Positions 149 and 154 each coordinate GTP.

The protein belongs to the GTP cyclohydrolase II family. Requires Zn(2+) as cofactor.

The enzyme catalyses GTP + 4 H2O = 2,5-diamino-6-hydroxy-4-(5-phosphoribosylamino)-pyrimidine + formate + 2 phosphate + 3 H(+). The protein operates within cofactor biosynthesis; riboflavin biosynthesis; 5-amino-6-(D-ribitylamino)uracil from GTP: step 1/4. Functionally, catalyzes the conversion of GTP to 2,5-diamino-6-ribosylamino-4(3H)-pyrimidinone 5'-phosphate (DARP), formate and pyrophosphate. In Shewanella piezotolerans (strain WP3 / JCM 13877), this protein is GTP cyclohydrolase-2.